A 247-amino-acid chain; its full sequence is Protein NipSnap homolog 3A (247 aa).

N6-acetyllysine occurs at positions 48 and 166.

Belongs to the NipSnap family.

It localises to the cytoplasm. Its subcellular location is the cytosol. This chain is Protein NipSnap homolog 3A (NIPSNAP3A), found in Pongo abelii (Sumatran orangutan).